Reading from the N-terminus, the 286-residue chain is Pantothenate synthetase (286 aa).

Met-30–His-37 provides a ligand contact to ATP. Catalysis depends on His-37, which acts as the Proton donor. Gln-61 provides a ligand contact to (R)-pantoate. Gln-61 is a beta-alanine binding site. Residue Gly-147–Asp-150 coordinates ATP. A (R)-pantoate-binding site is contributed by Gln-153. ATP-binding positions include Val-180 and Leu-188–Arg-191.

The protein belongs to the pantothenate synthetase family. As to quaternary structure, homodimer.

The protein resides in the cytoplasm. The catalysed reaction is (R)-pantoate + beta-alanine + ATP = (R)-pantothenate + AMP + diphosphate + H(+). It functions in the pathway cofactor biosynthesis; (R)-pantothenate biosynthesis; (R)-pantothenate from (R)-pantoate and beta-alanine: step 1/1. Its function is as follows. Catalyzes the condensation of pantoate with beta-alanine in an ATP-dependent reaction via a pantoyl-adenylate intermediate. The chain is Pantothenate synthetase from Novosphingobium aromaticivorans (strain ATCC 700278 / DSM 12444 / CCUG 56034 / CIP 105152 / NBRC 16084 / F199).